The sequence spans 86 residues: SEED MATURATION PROTEIN 1 (86 aa).

The tract at residues 52 to 86 (RIEKGKEQSAASGDQTQIQRDIKDIKGTRTDDSPR) is disordered. A compositionally biased stretch (polar residues) spans 60–70 (SAASGDQTQIQ). The segment covering 71–86 (RDIKDIKGTRTDDSPR) has biased composition (basic and acidic residues).

It belongs to the LEA type 3 family.

In terms of biological role, protein chaperone involved in seed maturation and dormancy maintenance after high temperature fluctuation (e.g. secondary dormancy after 3 days at 40 degrees Celsius), probably by protecting heat labile proteins required for secondary dormancy (e.g. G6PDH, HOP3, SR45, ECP63, SCL33, RPL32B, ChlADR1, MSBP1, MBF1B, At3g01690, At1g15280, At1g15290, At2g31410, At1g11630, At1g65090, EMB2279, EMB1674 and RPL35C). This is SEED MATURATION PROTEIN 1 from Arabidopsis thaliana (Mouse-ear cress).